The following is a 362-amino-acid chain: tRNA-specific 2-thiouridylase MnmA (362 aa).

ATP is bound by residues 6-13 (AMSGGVDS) and Leu32. Catalysis depends on Cys101, which acts as the Nucleophile. Cys101 and Cys197 are oxidised to a cystine. Gly125 contacts ATP. An interaction with tRNA region spans residues 147-149 (KDQ). Cys197 serves as the catalytic Cysteine persulfide intermediate.

It belongs to the MnmA/TRMU family.

It is found in the cytoplasm. It catalyses the reaction S-sulfanyl-L-cysteinyl-[protein] + uridine(34) in tRNA + AH2 + ATP = 2-thiouridine(34) in tRNA + L-cysteinyl-[protein] + A + AMP + diphosphate + H(+). Functionally, catalyzes the 2-thiolation of uridine at the wobble position (U34) of tRNA, leading to the formation of s(2)U34. The polypeptide is tRNA-specific 2-thiouridylase MnmA (Acidothermus cellulolyticus (strain ATCC 43068 / DSM 8971 / 11B)).